The following is a 142-amino-acid chain: Hemoglobin subunit alpha (142 aa).

A Globin domain is found at 2–142; it reads VLSSADKNNV…VSTVLTSKYR (141 aa). Ser-4 is subject to Phosphoserine. An N6-succinyllysine mark is found at Lys-8 and Lys-12. Lys-17 carries the post-translational modification N6-acetyllysine; alternate. Lys-17 is modified (N6-succinyllysine; alternate). Tyr-25 is subject to Phosphotyrosine. The residue at position 36 (Ser-36) is a Phosphoserine. Residue Lys-41 is modified to N6-succinyllysine. Ser-50 bears the Phosphoserine mark. His-59 is an O2 binding site. His-88 serves as a coordination point for heme b. Ser-103 is modified (phosphoserine). Thr-109 bears the Phosphothreonine mark. Residue Ser-125 is modified to Phosphoserine. A phosphothreonine mark is found at Thr-135 and Thr-138. Phosphoserine is present on Ser-139.

It belongs to the globin family. Heterotetramer of two alpha chains and two beta chains. As to expression, red blood cells.

Involved in oxygen transport from the lung to the various peripheral tissues. Its function is as follows. Hemopressin acts as an antagonist peptide of the cannabinoid receptor CNR1. Hemopressin-binding efficiently blocks cannabinoid receptor CNR1 and subsequent signaling. The sequence is that of Hemoglobin subunit alpha (HBA) from Panthera onca (Jaguar).